Here is a 274-residue protein sequence, read N- to C-terminus: HTH-type transcriptional regulator GadX (274 aa).

One can recognise an HTH araC/xylS-type domain in the interval 145 to 242 (TRVCTVINNN…GMTPTEYQER (98 aa)). DNA-binding regions (H-T-H motif) lie at residues 162–183 (ARIA…REEE) and 209–232 (IKRV…RNYY).

In terms of assembly, homodimer.

Its function is as follows. Positively regulates the expression of about fifteen genes involved in acid resistance such as gadA, gadB and gadC. Depending on the conditions (growth phase and medium), can repress gadW. The chain is HTH-type transcriptional regulator GadX (gadX) from Escherichia coli (strain K12).